Here is a 177-residue protein sequence, read N- to C-terminus: RNA silencing suppressor (177 aa).

As to quaternary structure, homooctamer. The eight monomers assemble into a closed ring that binds RNA.

It localises to the host cytoplasm. Functionally, acts as a suppressor of RNA-mediated gene silencing, also known as post-transcriptional gene silencing (PTGS), a mechanism of plant viral defense that limits the accumulation of viral RNAs. Binds to ssRNAs and dsRNAs in vitro. Also functions as a replication enhancer. The polypeptide is RNA silencing suppressor (Beta vulgaris (Sugar beet)).